The primary structure comprises 224 residues: MSKEIPTPYMWSYQPQTGHAAGASQDYSTQMNWFSAGPSMISQVYGIRDLRNKVLITQAEITKTPRTIMDPPIWPAAMLVQEAAPPKTVTLPRNHTLEQAMTNSGAQLAGGRQLCPSQIGIKSPVLAGTGIQLSEDIPSASWIRPDGIFQLGGGSRSSFSPTQAFLTLQQASSTPRAGGVGTYQFVREFVPEVYLNPFSGPPDTFPDQFIPNYDIVTNSVDGYD.

A Phosphothreonine; by host modification is found at Thr-64. A propeptide spanning residues 112 to 154 is cleaved from the precursor; that stretch reads RQLCPSQIGIKSPVLAGTGIQLSEDIPSASWIRPDGIFQLGGG.

The protein belongs to the adenoviridae hexon-linking protein family. In terms of assembly, interacts with the peripentonal hexons as well as the hexons in the facets. Part of a complex composed of the core-capsid bridging protein, the endosome lysis protein VI and the hexon-linking protein VIII; these interactions bridge the virus core to the capsid. Cleaved by the viral protease during virion maturation. May cause the middle segment to be shed from the capsid.

The protein localises to the virion. It is found in the host nucleus. Structural component of the virion that acts as a cement protein on the capsid interior and which glue the peripentonal hexons and group-of-nine hexons together. In Canis lupus familiaris (Dog), this protein is Pre-hexon-linking protein VIII.